The following is a 159-amino-acid chain: RNA pyrophosphohydrolase (159 aa).

The Nudix hydrolase domain maps to 6–149 (GFRPNVGIIL…KREVYRRALK (144 aa)). A Nudix box motif is present at residues 38-59 (GGINPQETPEDALYRELNEEVG).

Belongs to the Nudix hydrolase family. RppH subfamily. It depends on a divalent metal cation as a cofactor.

Accelerates the degradation of transcripts by removing pyrophosphate from the 5'-end of triphosphorylated RNA, leading to a more labile monophosphorylated state that can stimulate subsequent ribonuclease cleavage. The sequence is that of RNA pyrophosphohydrolase from Pseudomonas savastanoi pv. phaseolicola (strain 1448A / Race 6) (Pseudomonas syringae pv. phaseolicola (strain 1448A / Race 6)).